The chain runs to 367 residues: Aminomethyltransferase (367 aa).

This sequence belongs to the GcvT family. The glycine cleavage system is composed of four proteins: P, T, L and H.

It carries out the reaction N(6)-[(R)-S(8)-aminomethyldihydrolipoyl]-L-lysyl-[protein] + (6S)-5,6,7,8-tetrahydrofolate = N(6)-[(R)-dihydrolipoyl]-L-lysyl-[protein] + (6R)-5,10-methylene-5,6,7,8-tetrahydrofolate + NH4(+). The glycine cleavage system catalyzes the degradation of glycine. The sequence is that of Aminomethyltransferase from Lysinibacillus sphaericus (strain C3-41).